The following is a 580-amino-acid chain: Multidrug resistance-like ATP-binding protein MdlB (580 aa).

An ABC transmembrane type-1 domain is found at 25-310 (LILAFIFLLS…ITIQQSVLQQ (286 aa)). The next 6 helical transmembrane spans lie at 26-46 (ILAFIFLLSGSTSEVLGPILI), 61-81 (LLIILTIITLFIILQILSVFL), 150-170 (IILIFIILFAMFTLEWHMALV), 173-193 (FILPLVITIMLVYQYYSTPLL), 247-267 (LDGFLLRPLLSLLSSMILCNF), and 268-288 (MFLFSFFPVGAFEVGVLYAFI). The ABC transporter domain occupies 341–575 (INIQNVSFYH…KSCYYKMYKF (235 aa)). 375-382 (GHTGSGKS) is a binding site for ATP.

It belongs to the ABC transporter superfamily. Drug exporter-2 (TC 3.A.1.117) family.

The protein localises to the cell membrane. The enzyme catalyses ATP + H2O + xenobioticSide 1 = ADP + phosphate + xenobioticSide 2.. The chain is Multidrug resistance-like ATP-binding protein MdlB (mdlB) from Buchnera aphidicola subsp. Acyrthosiphon pisum (strain APS) (Acyrthosiphon pisum symbiotic bacterium).